Reading from the N-terminus, the 220-residue chain is Riboflavin kinase (220 aa).

An H-T-H motif-like region spans residues 1–92; that stretch reads MDTSDQYYRA…LSRILSIKSN (92 aa). The interval 93–220 is riboflavin kinase; it reads IVMTGIVVPG…GDEVTIEVTA (128 aa). 102-107 serves as a coordination point for CDP; it reads GMGEGK. Residues threonine 131 and asparagine 133 each contribute to the Mg(2+) site. Residues threonine 188 and glutamate 195 each contribute to the FMN site. Residue 200–203 coordinates CDP; that stretch reads KYLR.

Belongs to the archaeal riboflavin kinase family. Mg(2+) serves as cofactor.

It catalyses the reaction riboflavin + CTP = CDP + FMN + H(+). The protein operates within cofactor biosynthesis; FMN biosynthesis; FMN from riboflavin (CTP route): step 1/1. In terms of biological role, catalyzes the CTP-dependent phosphorylation of riboflavin (vitamin B2) to form flavin mononucleotide (FMN). The polypeptide is Riboflavin kinase (ribK) (Thermoplasma volcanium (strain ATCC 51530 / DSM 4299 / JCM 9571 / NBRC 15438 / GSS1)).